A 186-amino-acid polypeptide reads, in one-letter code: Mitoferrin-2B (186 aa).

One copy of the Solcar repeat lies at 75–163 (SNVTAHMLAG…FACYEKLKKT (89 aa)). The next 3 membrane-spanning stretches (helical) occupy residues 77 to 96 (VTAH…CLMY), 137 to 157 (RGLN…FACY), and 172 to 185 (GNCH…NSCP).

The protein belongs to the mitochondrial carrier (TC 2.A.29) family.

The protein resides in the mitochondrion inner membrane. The enzyme catalyses Fe(2+)(in) = Fe(2+)(out). Its function is as follows. Mitochondrial iron transporter that mediates iron uptake. Probably required for heme synthesis of hemoproteins and Fe-S cluster assembly in non-erythroid cells. In Xenopus laevis (African clawed frog), this protein is Mitoferrin-2B (slc25a28-b).